Here is a 401-residue protein sequence, read N- to C-terminus: Stearoyl-[acyl-carrier-protein] 9-desaturase 3, chloroplastic (401 aa).

The disordered stretch occupies residues M1–R31. The transit peptide at M1 to S35 directs the protein to the chloroplast. 6 residues coordinate Fe cation: E140, E178, H181, E231, E264, and H267.

Belongs to the fatty acid desaturase type 2 family. Homodimer. Requires Fe(2+) as cofactor. Ubiquitously expressed with a preference in leaves, flowers and stems.

Its subcellular location is the plastid. The protein localises to the chloroplast. It catalyses the reaction octadecanoyl-[ACP] + 2 reduced [2Fe-2S]-[ferredoxin] + O2 + 2 H(+) = (9Z)-octadecenoyl-[ACP] + 2 oxidized [2Fe-2S]-[ferredoxin] + 2 H2O. It participates in lipid metabolism; fatty acid metabolism. Converts stearoyl-ACP to oleoyl-ACP by introduction of a cis double bond between carbons 9 and 10 of the acyl chain. Also able to convert palmitoyl-ACP to palmitoleoyl-ACP at the C9 position. Exhibits delta-9 palmitoyl-[acyl-carrier-protein] desaturase (PAD) activity. Involved in omega-7 monounsaturated fatty acid biosynthesis, especially in the endosperm oil. The chain is Stearoyl-[acyl-carrier-protein] 9-desaturase 3, chloroplastic (S-ACP-DES3) from Arabidopsis thaliana (Mouse-ear cress).